A 576-amino-acid chain; its full sequence is RNA-directed RNA polymerase subunit beta (576 aa).

Residues 259–391 (RLARDGSLLN…PNRKKTFCDG (133 aa)) enclose the RdRp catalytic domain. Residues Asp-274, Asp-359, and Asp-360 each coordinate Mg(2+).

Homodimer; the replicase complex can dimerize. Part of the viral RNA-dependent RNA polymerase complex, the other subunits are the host ribosomal protein S1, EF-Tu and EF-Ts. S1 is needed for the initiation of genomic RNA (+)-strand replication. Mg(2+) serves as cofactor.

The enzyme catalyses RNA(n) + a ribonucleoside 5'-triphosphate = RNA(n+1) + diphosphate. Functionally, this is the catalytic subunit of the viral RNA-dependent RNA polymerase complex. This complex is involved in viral RNA replication that produces (+)-stranded genomes via a complementary, (-)-stranded intermediate. Binds RNA cooperatively with the host ribosomal protein S1. The chain is RNA-directed RNA polymerase subunit beta from Enterobacteria phage SP (Bacteriophage SP).